We begin with the raw amino-acid sequence, 161 residues long: Heme transporter hrg-6 (161 aa).

4 helical membrane passes run isoleucine 13–alanine 33, valine 38–leucine 58, valine 75–isoleucine 95, and tryptophan 115–isoleucine 135.

Belongs to the HRG family.

It is found in the membrane. Functionally, heme transporter. The chain is Heme transporter hrg-6 (hrg-6) from Caenorhabditis elegans.